Here is a 368-residue protein sequence, read N- to C-terminus: Polymerase delta-interacting protein 2 (368 aa).

The N-terminal 21 residues, methionine 1–leucine 21, are a transit peptide targeting the mitochondrion. Residues arginine 235–lysine 360 enclose the ApaG domain. The residue at position 292 (threonine 292) is a Phosphothreonine.

Interacts with PCNA and POLD2. Interacts with SSBP1. Interacts with PRIMPOL; leading to enhance DNA polymerase activity of PRIMPOL. Interacts with POLH. Interacts with POLD1; leading to stimulate DNA polymerase activity of POLD1.

Its subcellular location is the mitochondrion matrix. The protein localises to the nucleus. In terms of biological role, involved in DNA damage tolerance by regulating translesion synthesis (TLS) of templates carrying DNA damage lesions such as 8oxoG and abasic sites. May act by stimulating activity of DNA polymerases involved in TLS, such as PRIMPOL and polymerase delta (POLD1). The sequence is that of Polymerase delta-interacting protein 2 from Mus musculus (Mouse).